A 627-amino-acid chain; its full sequence is Interferon-induced GTP-binding protein MxB (627 aa).

A Dynamin-type G domain is found at 34–307; that stretch reads DLALPAIAVI…LVHHIQRSLP (274 aa). Residues 44 to 51 are G1 motif; sequence GDQSSGKS. 44–51 contributes to the GTP binding site; sequence GDQSSGKS. Positions 69–71 are G2 motif; the sequence is VTR. The G3 motif stretch occupies residues 145 to 148; sequence DLPG. Residues 145–149 and 214–217 each bind GTP; these read DLPGI and TKPD. The tract at residues 214 to 217 is G4 motif; sequence TKPD. Residues 246–249 form a G5 motif region; it reads RCRG. Residues 541–627 enclose the GED domain; that stretch reads LSEMKLHLES…MKAQNLLATY (87 aa).

The protein belongs to the TRAFAC class dynamin-like GTPase superfamily. Dynamin/Fzo/YdjA family.

Its subcellular location is the cytoplasm. In Danio rerio (Zebrafish), this protein is Interferon-induced GTP-binding protein MxB (mxb).